The chain runs to 372 residues: Signal peptide peptidase-like 1 (372 aa).

The Lumenal portion of the chain corresponds to 1-6 (METLWT). Residues 7 to 27 (LLYLLEPAPATLIVTAVTVTF) traverse the membrane as a helical segment. The Cytoplasmic segment spans residues 28-54 (ASAFRALNYGKEMERNRDFSEASITLD). A helical transmembrane segment spans residues 55–77 (SSQALMIPVMSSCSLLLMFYLFS). Residues 78 to 81 (SVSQ) lie on the Lumenal side of the membrane. A helical membrane pass occupies residues 82-104 (LLTAFTAIASVSSLFYWLSPYAV). At 105–123 (YMKTQLGLSDPFLSRCCSK) the chain is on the cytoplasmic side. Residues 124-146 (SFTRIQGLLLVACAMTVVAWLIS) traverse the membrane as a helical segment. The Lumenal portion of the chain corresponds to 147–149 (GHW). The helical transmembrane segment at 150-167 (VLNNLLGISICIAFVSHV) threads the bilayer. Topologically, residues 168–171 (RLPN) are cytoplasmic. A helical transmembrane segment spans residues 172 to 192 (IKICAMLLVCLFVYDIFWVFF). Aspartate 186 is an active-site residue. Over 193–257 (SERFFGANVM…GVVPGVSASD (65 aa)) the chain is Lumenal. The helical transmembrane segment at 258–278 (FMMLGLGDMAIPAMLLALVLC) threads the bilayer. Aspartate 265 is a catalytic residue. Topologically, residues 279 to 301 (FDHRKTRDVVNIFDLKSSKGHKY) are cytoplasmic. The helical transmembrane segment at 302 to 322 (IWYALPGYAIGLVAALAAGVL) threads the bilayer. Over 323-325 (THS) the chain is Lumenal. The chain crosses the membrane as a helical span at residues 326 to 346 (PQPALLYLVPSTLGPVIFMSW). The PAL signature appears at 328–330 (PAL). Over 347–372 (RRKDLAELWEGPALSNPIEKSHEIEI) the chain is Cytoplasmic.

The protein belongs to the peptidase A22B family. Ubiquitous.

The protein localises to the endosome membrane. In terms of biological role, intramembrane-cleaving aspartic protease (I-CLiP) that cleaves type II membrane signal peptides in the hydrophobic plane of the membrane. The chain is Signal peptide peptidase-like 1 (SPPL1) from Arabidopsis thaliana (Mouse-ear cress).